A 437-amino-acid polypeptide reads, in one-letter code: MTTFSPREIVSELDRYIVGQADAKRAVAIALRNRWRRQQLQGPLREEVAPKNILMIGPTGCGKTEISRRLARLANAPFLKVEATKFTEVGYVGRDVEQIVRDLVEVGIGLKRDEKRRSVQAKAEAAAEARILDALVGPTASQATRDSFRRRLRAGELDDKEVELELAGSATAGLPMFEIPGMPGAAMGAINLGDMLGKALGGQRGRPRRITVRDAHAPLMTEESDKLLDQDTIIQEAIREVEDNGIVFLDEVDKICAREGRGGADVSREGVQRDLLPLIEGTTVATKYGPVKTDHILFIASGAFHVSKPSDLLPELQGRLPIRVELAPLTVDDFRRILTETEASLLKQAVALMATEGVTVTFTDDAVDALARVAVDVNSSVENIGARRLQTVLERVLDEISFAAPDRSGEIVTIDAAYVRERVESLAQNADLSRFIL.

Residues Val18, 60 to 65 (GCGKTE), Asp250, Glu315, and Arg387 contribute to the ATP site.

It belongs to the ClpX chaperone family. HslU subfamily. As to quaternary structure, a double ring-shaped homohexamer of HslV is capped on each side by a ring-shaped HslU homohexamer. The assembly of the HslU/HslV complex is dependent on binding of ATP.

It is found in the cytoplasm. Functionally, ATPase subunit of a proteasome-like degradation complex; this subunit has chaperone activity. The binding of ATP and its subsequent hydrolysis by HslU are essential for unfolding of protein substrates subsequently hydrolyzed by HslV. HslU recognizes the N-terminal part of its protein substrates and unfolds these before they are guided to HslV for hydrolysis. The protein is ATP-dependent protease ATPase subunit HslU of Methylobacterium nodulans (strain LMG 21967 / CNCM I-2342 / ORS 2060).